The sequence spans 390 residues: Lipoyl synthase, mitochondrial (390 aa).

A mitochondrion-targeting transit peptide spans Met1–Leu18. The [4Fe-4S] cluster site is built by Cys99, Cys104, Cys110, Cys137, Cys141, Cys144, and Ser351. The Radical SAM core domain maps to Ala120–Leu340.

It belongs to the radical SAM superfamily. Lipoyl synthase family. [4Fe-4S] cluster serves as cofactor.

It is found in the mitochondrion. The enzyme catalyses [[Fe-S] cluster scaffold protein carrying a second [4Fe-4S](2+) cluster] + N(6)-octanoyl-L-lysyl-[protein] + 2 oxidized [2Fe-2S]-[ferredoxin] + 2 S-adenosyl-L-methionine + 4 H(+) = [[Fe-S] cluster scaffold protein] + N(6)-[(R)-dihydrolipoyl]-L-lysyl-[protein] + 4 Fe(3+) + 2 hydrogen sulfide + 2 5'-deoxyadenosine + 2 L-methionine + 2 reduced [2Fe-2S]-[ferredoxin]. It functions in the pathway protein modification; protein lipoylation via endogenous pathway; protein N(6)-(lipoyl)lysine from octanoyl-[acyl-carrier-protein]: step 2/2. Functionally, catalyzes the radical-mediated insertion of two sulfur atoms into the C-6 and C-8 positions of the octanoyl moiety bound to the lipoyl domains of lipoate-dependent enzymes, thereby converting the octanoylated domains into lipoylated derivatives. The polypeptide is Lipoyl synthase, mitochondrial (Coprinopsis cinerea (strain Okayama-7 / 130 / ATCC MYA-4618 / FGSC 9003) (Inky cap fungus)).